Consider the following 377-residue polypeptide: Erythronate-4-phosphate dehydrogenase (377 aa).

Residues S45 and T66 each contribute to the substrate site. Residues D146 and T175 each contribute to the NAD(+) site. The active site involves R208. Residue D232 coordinates NAD(+). Residue E237 is part of the active site. The active-site Proton donor is the H254. G257 serves as a coordination point for NAD(+). Substrate is bound at residue Y258.

This sequence belongs to the D-isomer specific 2-hydroxyacid dehydrogenase family. PdxB subfamily. As to quaternary structure, homodimer.

It localises to the cytoplasm. The enzyme catalyses 4-phospho-D-erythronate + NAD(+) = (R)-3-hydroxy-2-oxo-4-phosphooxybutanoate + NADH + H(+). Its pathway is cofactor biosynthesis; pyridoxine 5'-phosphate biosynthesis; pyridoxine 5'-phosphate from D-erythrose 4-phosphate: step 2/5. In terms of biological role, catalyzes the oxidation of erythronate-4-phosphate to 3-hydroxy-2-oxo-4-phosphonooxybutanoate. This Sodalis glossinidius (strain morsitans) protein is Erythronate-4-phosphate dehydrogenase.